We begin with the raw amino-acid sequence, 122 residues long: Large ribosomal subunit protein uL14 (122 aa).

Belongs to the universal ribosomal protein uL14 family. As to quaternary structure, part of the 50S ribosomal subunit. Forms a cluster with proteins L3 and L19. In the 70S ribosome, L14 and L19 interact and together make contacts with the 16S rRNA in bridges B5 and B8.

Binds to 23S rRNA. Forms part of two intersubunit bridges in the 70S ribosome. The polypeptide is Large ribosomal subunit protein uL14 (Rhodospirillum centenum (strain ATCC 51521 / SW)).